The sequence spans 59 residues: Protein translocase subunit SecE (59 aa).

The helical transmembrane segment at V39–F59 threads the bilayer.

It belongs to the SecE/SEC61-gamma family. As to quaternary structure, component of the Sec protein translocase complex. Heterotrimer consisting of SecY, SecE and SecG subunits. The heterotrimers can form oligomers, although 1 heterotrimer is thought to be able to translocate proteins. Interacts with the ribosome. Interacts with SecDF, and other proteins may be involved. Interacts with SecA.

The protein localises to the cell inner membrane. Essential subunit of the Sec protein translocation channel SecYEG. Clamps together the 2 halves of SecY. May contact the channel plug during translocation. The polypeptide is Protein translocase subunit SecE (Treponema pallidum (strain Nichols)).